The sequence spans 349 residues: Protein RecA (349 aa).

64–71 is a binding site for ATP; sequence GPESSGKT. Residues 328-349 form a disordered region; the sequence is NGEIEVEAPSEEEFEDLPLDLK. The segment covering 331–349 has biased composition (acidic residues); it reads IEVEAPSEEEFEDLPLDLK.

It belongs to the RecA family.

The protein localises to the cytoplasm. Functionally, can catalyze the hydrolysis of ATP in the presence of single-stranded DNA, the ATP-dependent uptake of single-stranded DNA by duplex DNA, and the ATP-dependent hybridization of homologous single-stranded DNAs. It interacts with LexA causing its activation and leading to its autocatalytic cleavage. This is Protein RecA from Halalkalibacterium halodurans (strain ATCC BAA-125 / DSM 18197 / FERM 7344 / JCM 9153 / C-125) (Bacillus halodurans).